A 68-amino-acid chain; its full sequence is Protein transport protein Sec61 subunit gamma (68 aa).

The Cytoplasmic portion of the chain corresponds to 1-32 (MDQVMAWVEPGKQFAKDSIRLVKRCTKPDRKE). A helical transmembrane segment spans residues 33–61 (FQKIAVATAIGFAIMGFIGFFVKLIHIPI). The Extracellular segment spans residues 62–68 (NNIIVGS).

Belongs to the SecE/SEC61-gamma family. As to quaternary structure, heterotrimeric complex composed of SEC61-alpha, SEC61-beta and SEC61-gamma. Component of the ribosome-associated ER translocon complex.

Its subcellular location is the endoplasmic reticulum membrane. In terms of biological role, necessary for protein translocation in the endoplasmic reticulum and multi-pass membrane protein biogenesis. This Ciona intestinalis (Transparent sea squirt) protein is Protein transport protein Sec61 subunit gamma (SEC61G).